The sequence spans 208 residues: Guanylate kinase (208 aa).

The Guanylate kinase-like domain occupies 4–185; that stretch reads GNLYILSAPS…ALADFQAILR (182 aa). 11-18 is a binding site for ATP; sequence APSGAGKS.

Belongs to the guanylate kinase family.

It is found in the cytoplasm. The catalysed reaction is GMP + ATP = GDP + ADP. Essential for recycling GMP and indirectly, cGMP. This Pasteurella multocida (strain Pm70) protein is Guanylate kinase (gmk).